The chain runs to 268 residues: Phosphatidylglycerol--prolipoprotein diacylglyceryl transferase (268 aa).

7 consecutive transmembrane segments (helical) span residues 10–30 (VALA…LIGI), 56–76 (LVFW…VLFY), 92–112 (WKGG…ALWF), 120–140 (FFEL…AGRI), 174–194 (PSQL…LWLF), 202–222 (MAVS…VEFV), and 236–256 (WLTM…GLIW). Arg139 contributes to the a 1,2-diacyl-sn-glycero-3-phospho-(1'-sn-glycerol) binding site.

This sequence belongs to the Lgt family.

Its subcellular location is the cell inner membrane. It carries out the reaction L-cysteinyl-[prolipoprotein] + a 1,2-diacyl-sn-glycero-3-phospho-(1'-sn-glycerol) = an S-1,2-diacyl-sn-glyceryl-L-cysteinyl-[prolipoprotein] + sn-glycerol 1-phosphate + H(+). It participates in protein modification; lipoprotein biosynthesis (diacylglyceryl transfer). In terms of biological role, catalyzes the transfer of the diacylglyceryl group from phosphatidylglycerol to the sulfhydryl group of the N-terminal cysteine of a prolipoprotein, the first step in the formation of mature lipoproteins. The polypeptide is Phosphatidylglycerol--prolipoprotein diacylglyceryl transferase (Pseudomonas putida (strain ATCC 700007 / DSM 6899 / JCM 31910 / BCRC 17059 / LMG 24140 / F1)).